A 193-amino-acid chain; its full sequence is Mediator of RNA polymerase II transcription subunit 20 (193 aa).

It belongs to the Mediator complex subunit 20 family. As to quaternary structure, component of the Mediator complex.

Its subcellular location is the nucleus. Functionally, component of the Mediator complex, a coactivator involved in the regulated transcription of nearly all RNA polymerase II-dependent genes. Mediator functions as a bridge to convey information from gene-specific regulatory proteins to the basal RNA polymerase II transcription machinery. The Mediator complex, having a compact conformation in its free form, is recruited to promoters by direct interactions with regulatory proteins and serves for the assembly of a functional preinitiation complex with RNA polymerase II and the general transcription factors. The chain is Mediator of RNA polymerase II transcription subunit 20 (med20) from Schizosaccharomyces pombe (strain 972 / ATCC 24843) (Fission yeast).